Reading from the N-terminus, the 160-residue chain is Crossover junction endodeoxyribonuclease RuvC (160 aa).

Catalysis depends on residues Asp7, Glu70, and Asp142. Asp7, Glu70, and Asp142 together coordinate Mg(2+).

It belongs to the RuvC family. As to quaternary structure, homodimer which binds Holliday junction (HJ) DNA. The HJ becomes 2-fold symmetrical on binding to RuvC with unstacked arms; it has a different conformation from HJ DNA in complex with RuvA. In the full resolvosome a probable DNA-RuvA(4)-RuvB(12)-RuvC(2) complex forms which resolves the HJ. Requires Mg(2+) as cofactor.

Its subcellular location is the cytoplasm. It carries out the reaction Endonucleolytic cleavage at a junction such as a reciprocal single-stranded crossover between two homologous DNA duplexes (Holliday junction).. Functionally, the RuvA-RuvB-RuvC complex processes Holliday junction (HJ) DNA during genetic recombination and DNA repair. Endonuclease that resolves HJ intermediates. Cleaves cruciform DNA by making single-stranded nicks across the HJ at symmetrical positions within the homologous arms, yielding a 5'-phosphate and a 3'-hydroxyl group; requires a central core of homology in the junction. The consensus cleavage sequence is 5'-(A/T)TT(C/G)-3'. Cleavage occurs on the 3'-side of the TT dinucleotide at the point of strand exchange. HJ branch migration catalyzed by RuvA-RuvB allows RuvC to scan DNA until it finds its consensus sequence, where it cleaves and resolves the cruciform DNA. The polypeptide is Crossover junction endodeoxyribonuclease RuvC (Ehrlichia ruminantium (strain Gardel)).